A 248-amino-acid chain; its full sequence is DNA repair protein RecO (248 aa).

The protein belongs to the RecO family.

Involved in DNA repair and RecF pathway recombination. The protein is DNA repair protein RecO of Oleidesulfovibrio alaskensis (strain ATCC BAA-1058 / DSM 17464 / G20) (Desulfovibrio alaskensis).